A 113-amino-acid polypeptide reads, in one-letter code: Hydrogenase maturation factor HypA (113 aa).

His-2 contacts Ni(2+). Zn(2+) contacts are provided by Cys-73, Cys-76, Cys-89, and Cys-92.

The protein belongs to the HypA/HybF family.

In terms of biological role, involved in the maturation of [NiFe] hydrogenases. Required for nickel insertion into the metal center of the hydrogenase. The sequence is that of Hydrogenase maturation factor HypA from Picosynechococcus sp. (strain ATCC 27264 / PCC 7002 / PR-6) (Agmenellum quadruplicatum).